The chain runs to 1036 residues: Pre-mRNA-processing factor 39-2 (1036 aa).

Positions 1–24 (MVTTEVRTAVSDKEPLQRSPELDS) are disordered. HAT repeat units follow at residues 62 to 94 (DDIE…HKIK), 96 to 128 (CTLE…FAVA), 131 to 166 (EDPH…YLLG), 168 to 201 (QQWS…IAAS), 278 to 310 (CFET…FGET), and 312 to 344 (GDFD…FVES). Disordered regions lie at residues 595–618 (GISS…YGTQ), 714–767 (PSGS…PVGT), and 995–1036 (KGDE…ISSI). Residues 714 to 726 (PSGSQSPQSYQSQ) are compositionally biased toward low complexity. Residues 740–755 (RDLNQMHRDSKPRSQE) are compositionally biased toward basic and acidic residues. The segment covering 1002–1036 (SMPQGSTTNSDIQKSQESGAVNEANLSSDTSISSI) has biased composition (polar residues).

It belongs to the PRP39 family.

The protein localises to the nucleus. Its function is as follows. Involved in pre-mRNA splicing. This chain is Pre-mRNA-processing factor 39-2, found in Arabidopsis thaliana (Mouse-ear cress).